Here is a 477-residue protein sequence, read N- to C-terminus: Glycogen synthase (477 aa).

Lysine 15 is an ADP-alpha-D-glucose binding site.

It belongs to the glycosyltransferase 1 family. Bacterial/plant glycogen synthase subfamily.

The enzyme catalyses [(1-&gt;4)-alpha-D-glucosyl](n) + ADP-alpha-D-glucose = [(1-&gt;4)-alpha-D-glucosyl](n+1) + ADP + H(+). It functions in the pathway glycan biosynthesis; glycogen biosynthesis. Synthesizes alpha-1,4-glucan chains using ADP-glucose. This Shigella boydii serotype 4 (strain Sb227) protein is Glycogen synthase.